A 485-amino-acid chain; its full sequence is Serine/threonine-protein kinase 4 (485 aa).

The Protein kinase domain occupies 30–281 (FDVLEKLGEG…ATELLQHPFI (252 aa)). ATP is bound by residues 36-44 (LGEGSYGSV) and lysine 59. Aspartate 149 functions as the Proton acceptor in the catalytic mechanism. Position 183 is a phosphothreonine; by autocatalysis (threonine 183). A coiled-coil region spans residues 287–313 (ESILRHLINEAQDAKLKRTELKQREVE). The SARAH domain occupies 431–478 (YSFLKDWSVTELQLRLNSLDPMMEQEIEEIHHKYQAKRQPILEAIESK).

This sequence belongs to the protein kinase superfamily. STE Ser/Thr protein kinase family. STE20 subfamily. As to quaternary structure, homodimer; mediated via the coiled-coil region. Mg(2+) serves as cofactor. Autophosphorylated on Thr-183. In terms of processing, proteolytically cleaved by caspase-3 during apoptosis at Asp-326 resulting in a 37 kDa form. Proteolytic cleavage results in kinase activation and nuclear translocation of the truncated form (MST1/N).

It is found in the cytoplasm. The protein resides in the nucleus. The catalysed reaction is L-seryl-[protein] + ATP = O-phospho-L-seryl-[protein] + ADP + H(+). It catalyses the reaction L-threonyl-[protein] + ATP = O-phospho-L-threonyl-[protein] + ADP + H(+). Its activity is regulated as follows. The C-terminal non-catalytic region inhibits the kinase activity, the enzyme is activated by caspase-cleavage. Homodimerization and autophosphorylation of Thr-183 is also required for full activation. Stress-activated, pro-apoptotic kinase which, following caspase-cleavage, enters the nucleus and induces chromatin condensation followed by internucleosomal DNA fragmentation. Key component of the Hippo signaling pathway which plays a pivotal role in organ size control and tumor suppression by restricting proliferation and promoting apoptosis. The core of this pathway is composed of a kinase cascade wherein stk3/mst2 and stk4/mst1, in complex with its regulatory protein sav1, phosphorylates and activates lats1/2 in complex with its regulatory protein mob1, which in turn phosphorylates and inactivates yap1 oncoprotein and wwtr1/taz. Phosphorylation of yap1 by lats2 inhibits its translocation into the nucleus to regulate cellular genes important for cell proliferation, cell death, and cell migration. Phosphorylates 'Ser-14' of histone H2B (H2BS14ph) during apoptosis. The chain is Serine/threonine-protein kinase 4 (stk4) from Xenopus tropicalis (Western clawed frog).